Reading from the N-terminus, the 464-residue chain is GDNF family receptor alpha-2 (464 aa).

Positions 1–21 (MILANVFCLFFFLDETLRSLA) are cleaved as a signal peptide. Intrachain disulfides connect cysteine 40/cysteine 93, cysteine 47/cysteine 53, cysteine 63/cysteine 78, cysteine 95/cysteine 105, cysteine 161/cysteine 222, cysteine 168/cysteine 174, cysteine 185/cysteine 200, cysteine 195/cysteine 241, cysteine 224/cysteine 229, cysteine 251/cysteine 323, cysteine 258/cysteine 264, cysteine 275/cysteine 293, cysteine 285/cysteine 347, and cysteine 325/cysteine 335. A glycan (N-linked (GlcNAc...) asparagine) is linked at asparagine 52. N-linked (GlcNAc...) asparagine glycosylation is found at asparagine 357 and asparagine 413. Residue serine 444 is the site of GPI-anchor amidated serine attachment. A propeptide spans 445–464 (RARPSAALTVLSVLMLKLAL) (removed in mature form).

It belongs to the GDNFR family. In terms of assembly, interacts with NRTN ligand and RET: forms a 2:2:2 ternary complex composed of NRTN ligand, GFRA2 and RET receptor. Also forms a 4:4:4 tetrameric complex composed of 4 copies of NRTN ligand, GFRA2 and RET receptor, which prevents endocytosis of RET. Interacts with SORL1.

It is found in the cell membrane. Functionally, receptor for neurturin (NRTN), a growth factor that supports the survival of sympathetic neurons. NRTN-binding leads to autophosphorylation and activation of the RET receptor. Also able to mediate GDNF signaling through the RET tyrosine kinase receptor. The sequence is that of GDNF family receptor alpha-2 (GFRA2) from Pongo abelii (Sumatran orangutan).